The following is a 534-amino-acid chain: Cytidylyl-2-hydroxyethylphosphonate methyltransferase (534 aa).

Residues 38-195 (KVLLLNPSAT…EHLNGNVSDD (158 aa)) enclose the B12-binding domain. The 229-residue stretch at 268 to 496 (TVGSRVGQLY…TYKQGIINVP (229 aa)) folds into the Radical SAM core domain. Residues Cys282, Cys286, and Cys289 each coordinate [4Fe-4S] cluster.

Belongs to the radical SAM superfamily. It depends on [4Fe-4S] cluster as a cofactor. Methylcob(III)alamin serves as cofactor.

The enzyme catalyses cytidine 5'-{[hydroxy(2-hydroxyethyl)phosphonoyl]phosphate} + AH2 + 2 S-adenosyl-L-methionine = cytidine 5'-({hydroxy[(S)-2-hydroxypropyl]phosphonoyl}phosphate) + 5'-deoxyadenosine + L-methionine + A + S-adenosyl-L-homocysteine + 2 H(+). Its pathway is antibiotic biosynthesis; fosfomycin biosynthesis. Involved in fosfomycin biosynthesis. Catalyzes the C-methylation of cytidylyl-2-hydroxyethylphosphonate (HEP-CMP) to form cytidylyl-2-hydroxypropylphosphonate (HPP-CMP). The C-methylation is not stereoselective and the ratio of (S)- to (R)-HPP-CMP is almost equal in vitro. In Streptomyces wedmorensis, this protein is Cytidylyl-2-hydroxyethylphosphonate methyltransferase.